We begin with the raw amino-acid sequence, 148 residues long: Protein MGF 360-18R (148 aa).

Belongs to the asfivirus MGF 360 family.

Plays a role in virus cell tropism, and may be required for efficient virus replication in macrophages. The protein is Protein MGF 360-18R of African swine fever virus (strain Badajoz 1971 Vero-adapted) (Ba71V).